The sequence spans 445 residues: Enolase (445 aa).

Positions 165 and 174 each coordinate substrate. Glu217 (proton donor) is an active-site residue. Residues Asp252, Glu303, and Asp330 each contribute to the Mg(2+) site. The substrate site is built by Glu303 and Asp330. Lys355 functions as the Proton acceptor in the catalytic mechanism. Substrate-binding positions include 382-385 (SHRS) and Lys406.

The protein belongs to the enolase family. In terms of assembly, homodimer. Requires Mg(2+) as cofactor.

The protein resides in the cytoplasm. It carries out the reaction (2R)-2-phosphoglycerate = phosphoenolpyruvate + H2O. Its pathway is carbohydrate degradation; glycolysis; pyruvate from D-glyceraldehyde 3-phosphate: step 4/5. The polypeptide is Enolase (ENO) (Eimeria tenella (Coccidian parasite)).